We begin with the raw amino-acid sequence, 213 residues long: Ribonuclease HII (213 aa).

An RNase H type-2 domain is found at 27–213 (HAVAGVDEAG…FRGVKEHVAP (187 aa)). Asp33, Glu34, and Asp125 together coordinate a divalent metal cation.

It belongs to the RNase HII family. Mn(2+) is required as a cofactor. It depends on Mg(2+) as a cofactor.

The protein resides in the cytoplasm. It carries out the reaction Endonucleolytic cleavage to 5'-phosphomonoester.. Functionally, endonuclease that specifically degrades the RNA of RNA-DNA hybrids. This Geobacter metallireducens (strain ATCC 53774 / DSM 7210 / GS-15) protein is Ribonuclease HII.